The sequence spans 218 residues: Guanylate kinase (218 aa).

In terms of domain architecture, Guanylate kinase-like spans 14-193 (GLMLVLSSPS…AFAEVRGIVV (180 aa)). 21–28 (SPSGAGKS) contacts ATP.

Belongs to the guanylate kinase family.

It localises to the cytoplasm. It catalyses the reaction GMP + ATP = GDP + ADP. In terms of biological role, essential for recycling GMP and indirectly, cGMP. The chain is Guanylate kinase (gmk) from Mesorhizobium japonicum (strain LMG 29417 / CECT 9101 / MAFF 303099) (Mesorhizobium loti (strain MAFF 303099)).